We begin with the raw amino-acid sequence, 396 residues long: Small ribosomal subunit protein mS27 (396 aa).

It belongs to the mitochondrion-specific ribosomal protein mS27 family. In terms of assembly, component of the mitochondrial small ribosomal subunit (mt-SSU). Mature N.crassa 74S mitochondrial ribosomes consist of a small (37S) and a large (54S) subunit. The 37S small subunit contains a 16S ribosomal RNA (16S mt-rRNA) and 32 different proteins. The 54S large subunit contains a 23S rRNA (23S mt-rRNA) and 42 different proteins.

Its subcellular location is the mitochondrion. In terms of biological role, component of the mitochondrial ribosome (mitoribosome), a dedicated translation machinery responsible for the synthesis of mitochondrial genome-encoded proteins, including at least some of the essential transmembrane subunits of the mitochondrial respiratory chain. The mitoribosomes are attached to the mitochondrial inner membrane and translation products are cotranslationally integrated into the membrane. The polypeptide is Small ribosomal subunit protein mS27 (mrp13) (Neurospora crassa (strain ATCC 24698 / 74-OR23-1A / CBS 708.71 / DSM 1257 / FGSC 987)).